A 263-amino-acid polypeptide reads, in one-letter code: Endonuclease 8 (263 aa).

The active-site Schiff-base intermediate with DNA is Pro-2. The active-site Proton donor is the Glu-3. The Proton donor; for beta-elimination activity role is filled by Lys-53. 3 residues coordinate DNA: Gln-70, Arg-125, and Asn-169. An FPG-type zinc finger spans residues Lys-229 to Ser-263. Residue Arg-253 is the Proton donor; for delta-elimination activity of the active site.

The protein belongs to the FPG family. Zn(2+) serves as cofactor.

It catalyses the reaction 2'-deoxyribonucleotide-(2'-deoxyribose 5'-phosphate)-2'-deoxyribonucleotide-DNA = a 3'-end 2'-deoxyribonucleotide-(2,3-dehydro-2,3-deoxyribose 5'-phosphate)-DNA + a 5'-end 5'-phospho-2'-deoxyribonucleoside-DNA + H(+). In terms of biological role, involved in base excision repair of DNA damaged by oxidation or by mutagenic agents. Acts as a DNA glycosylase that recognizes and removes damaged bases. Has a preference for oxidized pyrimidines, such as thymine glycol, 5,6-dihydrouracil and 5,6-dihydrothymine. Has AP (apurinic/apyrimidinic) lyase activity and introduces nicks in the DNA strand. Cleaves the DNA backbone by beta-delta elimination to generate a single-strand break at the site of the removed base with both 3'- and 5'-phosphates. In Pectobacterium atrosepticum (strain SCRI 1043 / ATCC BAA-672) (Erwinia carotovora subsp. atroseptica), this protein is Endonuclease 8.